We begin with the raw amino-acid sequence, 389 residues long: tRNA-specific 2-thiouridylase MnmA (389 aa).

Residues 35–42 and Met-61 contribute to the ATP site; that span reads GMSGGVDS. The segment at 121 to 123 is interaction with target base in tRNA; sequence NPD. Residue Cys-126 is the Nucleophile of the active site. A disulfide bond links Cys-126 and Cys-223. ATP is bound at residue Gly-151. Residues 173–175 form an interaction with tRNA region; that stretch reads KDQ. Cys-223 (cysteine persulfide intermediate) is an active-site residue. The interval 335–336 is interaction with tRNA; sequence RY.

The protein belongs to the MnmA/TRMU family.

The protein resides in the cytoplasm. The catalysed reaction is S-sulfanyl-L-cysteinyl-[protein] + uridine(34) in tRNA + AH2 + ATP = 2-thiouridine(34) in tRNA + L-cysteinyl-[protein] + A + AMP + diphosphate + H(+). Catalyzes the 2-thiolation of uridine at the wobble position (U34) of tRNA, leading to the formation of s(2)U34. The chain is tRNA-specific 2-thiouridylase MnmA from Mannheimia succiniciproducens (strain KCTC 0769BP / MBEL55E).